Reading from the N-terminus, the 117-residue chain is UPF0344 protein GK0697 (117 aa).

4 helical membrane passes run 1 to 21, 39 to 59, 60 to 80, and 97 to 117; these read MTHAHITSWLITIVLFFLAVS, LFYILTIVTGLLLLHSIASIS, ALYWLKALAGLWVIGAMEMVL, and VIALAVTLFLGLLLPLGFDLF.

This sequence belongs to the UPF0344 family.

The protein resides in the cell membrane. The chain is UPF0344 protein GK0697 from Geobacillus kaustophilus (strain HTA426).